Consider the following 365-residue polypeptide: Phosphopantothenate--cysteine ligase CAB2 (365 aa).

Residues 228 to 250 (QSGDNGKMGANNDTEGTTRTTPD) form a disordered region. Polar residues predominate over residues 238–248 (NNDTEGTTRTT).

This sequence belongs to the PPC synthetase family. Homodimer.

The protein localises to the cytoplasm. The protein resides in the nucleus. It carries out the reaction (R)-4'-phosphopantothenate + L-cysteine + CTP = N-[(R)-4-phosphopantothenoyl]-L-cysteine + CMP + diphosphate + H(+). Its pathway is cofactor biosynthesis; coenzyme A biosynthesis; CoA from (R)-pantothenate: step 2/5. Its function is as follows. Catalyzes the first step in the biosynthesis of coenzyme A from vitamin B5, where cysteine is conjugated to 4'-phosphopantothenate to form 4-phosphopantothenoylcysteine. This is Phosphopantothenate--cysteine ligase CAB2 (CAB2) from Saccharomyces cerevisiae (strain ATCC 204508 / S288c) (Baker's yeast).